A 237-amino-acid polypeptide reads, in one-letter code: Coat protein (237 aa).

A disordered region spans residues 1 to 28 (MSAPASTTQATGSTTSTTTKTAGATPAT).

Belongs to the potexvirus capsid protein family.

The protein localises to the virion. Its function is as follows. Required for genome encapsidation. Forms ribonucleoprotein complexes along with TGB1 helicase and viral RNA. This chain is Coat protein, found in Brassica campestris (Field mustard).